We begin with the raw amino-acid sequence, 591 residues long: Metalloendopeptidase OPG085 (591 aa).

H41 contributes to the Zn(2+) binding site. The active site involves E44. Zn(2+) contacts are provided by H45 and E112.

Belongs to the peptidase M44 family. It depends on Zn(2+) as a cofactor. In terms of processing, undergoes proteolytic processing during the course of infection. May be cleaved into 46 kDa and 22 kDa products (Potential).

It is found in the virion. Its function is as follows. Probably involved in maturation of some viral proteins by processing them preferentially at Ala-Gly-|-Ser/Thr/Lys motifs. Does not seem to be responsible for the cleavage of major core proteins. This Homo sapiens (Human) protein is Metalloendopeptidase OPG085 (OPG085).